The sequence spans 463 residues: Adenosylhomocysteinase (463 aa).

Residues Thr-54, Asp-128, and Glu-189 each contribute to the substrate site. Thr-190–Thr-192 contributes to the NAD(+) binding site. Residues Lys-219 and Asp-223 each contribute to the substrate site. Residues Asn-224, Gly-253–Gly-258, Glu-276, Asn-311, Ile-332–His-334, and Asn-377 each bind NAD(+).

The protein belongs to the adenosylhomocysteinase family. It depends on NAD(+) as a cofactor.

The protein resides in the cytoplasm. The enzyme catalyses S-adenosyl-L-homocysteine + H2O = L-homocysteine + adenosine. The protein operates within amino-acid biosynthesis; L-homocysteine biosynthesis; L-homocysteine from S-adenosyl-L-homocysteine: step 1/1. Functionally, may play a key role in the regulation of the intracellular concentration of adenosylhomocysteine. This Cereibacter sphaeroides (Rhodobacter sphaeroides) protein is Adenosylhomocysteinase.